Consider the following 333-residue polypeptide: tRNA N6-adenosine threonylcarbamoyltransferase (333 aa).

Positions 111 and 115 each coordinate Fe cation. Substrate contacts are provided by residues 134-138 (LVSGG), D167, G180, and N272. D300 provides a ligand contact to Fe cation.

It belongs to the KAE1 / TsaD family. Fe(2+) serves as cofactor.

Its subcellular location is the cytoplasm. The catalysed reaction is L-threonylcarbamoyladenylate + adenosine(37) in tRNA = N(6)-L-threonylcarbamoyladenosine(37) in tRNA + AMP + H(+). Functionally, required for the formation of a threonylcarbamoyl group on adenosine at position 37 (t(6)A37) in tRNAs that read codons beginning with adenine. Is involved in the transfer of the threonylcarbamoyl moiety of threonylcarbamoyl-AMP (TC-AMP) to the N6 group of A37, together with TsaE and TsaB. TsaD likely plays a direct catalytic role in this reaction. This chain is tRNA N6-adenosine threonylcarbamoyltransferase, found in Legionella pneumophila (strain Lens).